The following is a 628-amino-acid chain: MLKFQETAKCVGRRPTVIPMYPTALIARRYVLQQKLGSGSFGTVYLVSDKKAKPGEELKVLKEISVGELNPNETVQANVEAQLLSRLHHPAIVRFHASFMEQETFCIITEYCEGRDLDYRIQEYKEAGKVFAENQIVEWFIQLLLGVDYMHERRILHRDLKSKNIFLKNNLLKIGDFGVSRLLMGSCELATTLTGTPHYMSPEALKHQGYDAKSDIWSLACILYEMCCLDHAFAGSSFLSVVLNIVEGKTPSLPDRYPRELNTIMERMLNKSPSLRPSAADILKAPYMEEQLQLLMCKYPEMTLEDKNSVCQKEAAHTINAVQKKLHLQTLQALSDTQKTTPRERMWLRKLQAADERARRLKKIAEENYKENDKRMQALRSRNVGSVHAHVLHELDERTLESLPEPQSLPCLDLDELEPSLEDTIVDLGHYEIPEDPLVAEQYYSDVFDSCSEDSEEQEEEMIFSEAGGDTKEEESPSVYRTNQQDSDTAALVGCLEHVLGYTSLDTKTITNAVTDMSPGPMVFNSAVARTKMKRMKESAVQKLGMETFEEVYDYLKRARHQNAREAEIWEHLETVVPRASDCFEVDQLLYFEELLLTMEGKEPSLQNLPCEAAQKKPVKGTHFCDNP.

The region spanning 30–288 (YVLQQKLGSG…AADILKAPYM (259 aa)) is the Protein kinase domain. ATP is bound by residues 36 to 44 (LGSGSFGTV) and K62. Catalysis depends on D159, which acts as the Proton acceptor. Residue S274 is modified to Phosphoserine; by CHEK1. Positions 347–385 (WLRKLQAADERARRLKKIAEENYKENDKRMQALRSRNVG) form a coiled coil. Residues 452–463 (SEDSEEQEEEMI) show a composition bias toward acidic residues. Residues 452-475 (SEDSEEQEEEMIFSEAGGDTKEEE) are disordered.

The protein belongs to the protein kinase superfamily. NEK Ser/Thr protein kinase family. NIMA subfamily. In terms of assembly, interacts with NEK2. The cofactor is Mn(2+). Mg(2+) serves as cofactor. In terms of processing, phosphorylated by NEK2. Phosphorylation at Ser-274 is important for its activation.

Its subcellular location is the nucleus. It is found in the nucleolus. It catalyses the reaction L-seryl-[protein] + ATP = O-phospho-L-seryl-[protein] + ADP + H(+). The enzyme catalyses L-threonyl-[protein] + ATP = O-phospho-L-threonyl-[protein] + ADP + H(+). Its activity is regulated as follows. Autorepressed by intramolecular binding of the C-terminus which dissociates following phosphorylation by NEK2. Activated in response to DNA damage. Inhibited by zinc. In terms of biological role, protein kinase which plays an important role in the G2/M checkpoint response to DNA damage. Controls degradation of CDC25A by directly phosphorylating it on residues whose phosphorylation is required for BTRC-mediated polyubiquitination and degradation. The chain is Serine/threonine-protein kinase Nek11 from Mus musculus (Mouse).